The sequence spans 337 residues: tRNA N6-adenosine threonylcarbamoyltransferase (337 aa).

Positions 111 and 115 each coordinate Fe cation. Residues 134 to 138, Asp-167, Gly-180, and Asn-272 contribute to the substrate site; that span reads LVSGG. Asp-300 contacts Fe cation.

It belongs to the KAE1 / TsaD family. Fe(2+) serves as cofactor.

It localises to the cytoplasm. It carries out the reaction L-threonylcarbamoyladenylate + adenosine(37) in tRNA = N(6)-L-threonylcarbamoyladenosine(37) in tRNA + AMP + H(+). In terms of biological role, required for the formation of a threonylcarbamoyl group on adenosine at position 37 (t(6)A37) in tRNAs that read codons beginning with adenine. Is involved in the transfer of the threonylcarbamoyl moiety of threonylcarbamoyl-AMP (TC-AMP) to the N6 group of A37, together with TsaE and TsaB. TsaD likely plays a direct catalytic role in this reaction. This is tRNA N6-adenosine threonylcarbamoyltransferase from Aeromonas salmonicida (strain A449).